A 113-amino-acid polypeptide reads, in one-letter code: Hydrogenase maturation factor HypA (113 aa).

Ni(2+) is bound at residue histidine 2. Zn(2+)-binding residues include cysteine 73, cysteine 76, cysteine 89, and cysteine 92.

This sequence belongs to the HypA/HybF family.

Functionally, involved in the maturation of [NiFe] hydrogenases. Required for nickel insertion into the metal center of the hydrogenase. The polypeptide is Hydrogenase maturation factor HypA (Cereibacter sphaeroides (strain KD131 / KCTC 12085) (Rhodobacter sphaeroides)).